Here is a 335-residue protein sequence, read N- to C-terminus: Cytoskeleton protein RodZ (335 aa).

Residues 1 to 111 are Cytoplasmic-facing; sequence MNTEATHDQN…LGKRRKKRDG (111 aa). In terms of domain architecture, HTH cro/C1-type spans 19-71; sequence LRNAREQLGLSQQAVAERLCLKVSTVRDIEEDKAPADLASTFLRGYIRSYARL. Residues 30-49 constitute a DNA-binding region (H-T-H motif); that stretch reads QQAVAERLCLKVSTVRDIEE. Residues 112–132 form a helical; Signal-anchor for type II membrane protein membrane-spanning segment; it reads WLMTFTWLVLFVVIGLSGAWW. Residues 133 to 335 lie on the Periplasmic side of the membrane; it reads WQDHKAQQEE…TLNAEQSPAQ (203 aa). The segment covering 148–164 has biased composition (polar residues); it reads DQSSAELNNNQSQSVPL. A disordered region spans residues 148–244; sequence DQSSAELNNN…PLPTDQAGVT (97 aa). Low complexity-rich tracts occupy residues 165–205 and 217–239; these read DTST…DPQQ and DTAA…LPTD.

This sequence belongs to the RodZ family.

It localises to the cell inner membrane. Its function is as follows. Cytoskeletal protein that is involved in cell-shape control through regulation of the length of the long axis. The chain is Cytoskeleton protein RodZ from Escherichia coli O6:H1 (strain CFT073 / ATCC 700928 / UPEC).